The following is a 350-amino-acid chain: Phosphotriesterase-related protein (350 aa).

A divalent metal cation is bound by residues H24, H26, E170, H202, H231, and D299.

The protein belongs to the metallo-dependent hydrolases superfamily. Phosphotriesterase family. A divalent metal cation serves as cofactor.

The chain is Phosphotriesterase-related protein from Nematostella vectensis (Starlet sea anemone).